A 597-amino-acid polypeptide reads, in one-letter code: Chaperonin 60 subunit beta 3, chloroplastic (597 aa).

The segment at 1–20 (MASTFSATSSMGSSLAPPSN) is disordered. A chloroplast-targeting transit peptide spans 1–29 (MASTFSATSSMGSSLAPPSNRLSSFVSIS). Residues serine 97 and serine 474 each carry the phosphoserine modification. Positions 387-489 (STEEVVKKRV…KETLANDEEK (103 aa)) form a coiled coil.

It belongs to the chaperonin (HSP60) family. Part of the Cpn60 complex composed of 7 alpha and 7 beta subunits. Can also form a complex composed of 14 beta subunits only. Both complexes show ATPase activity. The Cpn60 complex interacts with the Cpn10 complex.

The protein localises to the plastid. The protein resides in the chloroplast. Its function is as follows. Involved in protein assisted folding. The protein is Chaperonin 60 subunit beta 3, chloroplastic (CPN60B3) of Arabidopsis thaliana (Mouse-ear cress).